The sequence spans 336 residues: Ketol-acid reductoisomerase (NADP(+)) (336 aa).

The KARI N-terminal Rossmann domain occupies 3 to 183; it reads ATMYYDRDVS…GGTRAGVLET (181 aa). NADP(+) is bound by residues 26-29, arginine 49, serine 52, serine 54, and 84-87; these read YGSQ and DETQ. Histidine 109 is an active-site residue. Residue glycine 135 participates in NADP(+) binding. A KARI C-terminal knotted domain is found at 184-329; the sequence is TFKEETETDL…RELRSKMPFI (146 aa). Residues aspartate 192, glutamate 196, glutamate 228, and glutamate 232 each contribute to the Mg(2+) site. Residue serine 253 coordinates substrate.

Belongs to the ketol-acid reductoisomerase family. Requires Mg(2+) as cofactor.

It catalyses the reaction (2R)-2,3-dihydroxy-3-methylbutanoate + NADP(+) = (2S)-2-acetolactate + NADPH + H(+). The enzyme catalyses (2R,3R)-2,3-dihydroxy-3-methylpentanoate + NADP(+) = (S)-2-ethyl-2-hydroxy-3-oxobutanoate + NADPH + H(+). It participates in amino-acid biosynthesis; L-isoleucine biosynthesis; L-isoleucine from 2-oxobutanoate: step 2/4. It functions in the pathway amino-acid biosynthesis; L-valine biosynthesis; L-valine from pyruvate: step 2/4. Functionally, involved in the biosynthesis of branched-chain amino acids (BCAA). Catalyzes an alkyl-migration followed by a ketol-acid reduction of (S)-2-acetolactate (S2AL) to yield (R)-2,3-dihydroxy-isovalerate. In the isomerase reaction, S2AL is rearranged via a Mg-dependent methyl migration to produce 3-hydroxy-3-methyl-2-ketobutyrate (HMKB). In the reductase reaction, this 2-ketoacid undergoes a metal-dependent reduction by NADPH to yield (R)-2,3-dihydroxy-isovalerate. The chain is Ketol-acid reductoisomerase (NADP(+)) from Deinococcus geothermalis (strain DSM 11300 / CIP 105573 / AG-3a).